Reading from the N-terminus, the 660-residue chain is PAN2-PAN3 deadenylation complex subunit PAN3 (660 aa).

The C3H1-type zinc-finger motif lies at 7–36 (SAKDTFCKNVLIYGYCKYENKGCAFSHTVK). Disordered regions lie at residues 36–60 (KPTS…TNAD) and 150–186 (SPVM…PTSA). Positions 43–59 (GSQGSNATTNSSGNTNA) are enriched in low complexity. The PABPC-interacting motif-2 (PAM-2) signature appears at 59-79 (ADMKKKFNFNTPSFQPSTVPN). The segment covering 150–159 (SPVMAQSVST) has biased composition (polar residues). The interval 252–528 (QTLPRSNLPD…LQEFNRNHLS (277 aa)) is pseudokinase domain. Residues Arg304, 358–365 (DYFPNSNT), and 415–416 (SK) each bind ATP. The stretch at 529 to 567 (RRILNFCSNAQDSQDFMESQLSTELENARVFRLITKLNF) forms a coiled coil. The segment at 568–660 (IIDRPEYDND…DSAFRTLTRG (93 aa)) is knob domain.

Belongs to the protein kinase superfamily. PAN3 family. In terms of assembly, homodimer. Forms a heterotrimer with a catalytic subunit PAN2 to form the poly(A)-nuclease (PAN) deadenylation complex. Interacts (via PAM-2 motif) with poly(A)-binding protein PAB1 (via PABC domain), conferring substrate specificity of the enzyme complex.

The protein localises to the cytoplasm. Functionally, regulatory subunit of the poly(A)-nuclease (PAN) deadenylation complex, one of two cytoplasmic mRNA deadenylases involved in mRNA turnover. PAN specifically shortens poly(A) tails of RNA and the activity is stimulated by poly(A)-binding protein PAB1. PAN deadenylation is followed by rapid degradation of the shortened mRNA tails by the CCR4-NOT complex. Deadenylated mRNAs are then degraded by two alternative mechanisms, namely exosome-mediated 3'-5' exonucleolytic degradation, or deadenylation-dependent mRNA decaping and subsequent 5'-3' exonucleolytic degradation by XRN1. May also be involved in post-transcriptional maturation of mRNA poly(A) tails. PAN3 acts as a positive regulator for PAN activity, recruiting the catalytic subunit PAN2 to mRNA via its interaction with RNA and with PAB1. This Debaryomyces hansenii (strain ATCC 36239 / CBS 767 / BCRC 21394 / JCM 1990 / NBRC 0083 / IGC 2968) (Yeast) protein is PAN2-PAN3 deadenylation complex subunit PAN3.